The following is a 160-amino-acid chain: Ribosomal RNA large subunit methyltransferase H (160 aa).

S-adenosyl-L-methionine-binding residues include L76 and G108.

This sequence belongs to the RNA methyltransferase RlmH family. As to quaternary structure, homodimer.

It is found in the cytoplasm. The enzyme catalyses pseudouridine(1915) in 23S rRNA + S-adenosyl-L-methionine = N(3)-methylpseudouridine(1915) in 23S rRNA + S-adenosyl-L-homocysteine + H(+). Specifically methylates the pseudouridine at position 1915 (m3Psi1915) in 23S rRNA. The chain is Ribosomal RNA large subunit methyltransferase H from Afipia carboxidovorans (strain ATCC 49405 / DSM 1227 / KCTC 32145 / OM5) (Oligotropha carboxidovorans).